Reading from the N-terminus, the 219-residue chain is Small ribosomal subunit protein uS3 (219 aa).

Residues 38–106 (IRKFIEKRLV…RVHINIVEIK (69 aa)) form the KH type-2 domain.

It belongs to the universal ribosomal protein uS3 family. As to quaternary structure, part of the 30S ribosomal subunit. Forms a tight complex with proteins S10 and S14.

In terms of biological role, binds the lower part of the 30S subunit head. Binds mRNA in the 70S ribosome, positioning it for translation. This Levilactobacillus brevis (strain ATCC 367 / BCRC 12310 / CIP 105137 / JCM 1170 / LMG 11437 / NCIMB 947 / NCTC 947) (Lactobacillus brevis) protein is Small ribosomal subunit protein uS3.